Here is a 255-residue protein sequence, read N- to C-terminus: Protein YIPF7 (255 aa).

Over 1-124 (MSNLGQFDSD…ADGSIMNETD (124 aa)) the chain is Cytoplasmic. The chain crosses the membrane as a helical span at residues 125–145 (LTGPILFCMALGATLLLAGKV). A topological domain (lumenal) is located at residue Gln-146. The chain crosses the membrane as a helical span at residues 147–167 (FGYVYGMSAIGCLGIHALLNL). Residues 168–180 (MSSSGVSYGCVAS) are Cytoplasmic-facing. Residues 181-201 (VLGYCLLPMVILSSCAIFFSL) traverse the membrane as a helical segment. The Lumenal segment spans residues 202-204 (QGT). A helical membrane pass occupies residues 205 to 225 (FGTVSALVIIGWCSLSASKIF). Residues 226 to 234 (TSALAMEGQ) are Cytoplasmic-facing. Residues 235–255 (QLLIAYPCALLYGLFALVTVF) traverse the membrane as a helical segment.

It belongs to the YIP1 family.

It localises to the endoplasmic reticulum membrane. The protein localises to the golgi apparatus. Its subcellular location is the cis-Golgi network membrane. The protein resides in the trans-Golgi network membrane. The protein is Protein YIPF7 (YIPF7) of Bos taurus (Bovine).